A 227-amino-acid polypeptide reads, in one-letter code: GTPase ERas (227 aa).

The segment covering 1–19 (MALPTKSSILDLSSGTPCT) has biased composition (polar residues). Residues 1–25 (MALPTKSSILDLSSGTPCTRSPEES) are disordered. GTP is bound at residue 48 to 55 (GASGVGKS). The Effector region motif lies at 70–78 (HDPTIQDSY). GTP is bound by residues 95–99 (DTSGQ) and 151–154 (NKCD). Residues Cys220 and Cys222 are each lipidated (S-palmitoyl cysteine). Cys224 is modified (cysteine methyl ester). Cys224 carries S-farnesyl cysteine lipidation. A propeptide spans 225 to 227 (SVA) (removed in mature form).

Belongs to the small GTPase superfamily. Ras family. In terms of assembly, interacts with PIK3CD. Expressed in several undifferentiated mouse embryonic stem cell lines.

Its subcellular location is the cell membrane. It carries out the reaction GTP + H2O = GDP + phosphate + H(+). Its activity is regulated as follows. Alternates between an inactive form bound to GDP and an active form bound to GTP. Activated by a guanine nucleotide-exchange factor (GEF) and inactivated by a GTPase-activating protein (GAP). Ras proteins bind GDP/GTP and possess intrinsic GTPase activity. Plays an important role in the tumor-like growth properties of embryonic stem cells. The sequence is that of GTPase ERas (Eras) from Mus musculus (Mouse).